A 244-amino-acid polypeptide reads, in one-letter code: Probable histone-lysine N-methyltransferase set-23 (244 aa).

The Pre-SET domain maps to 25–86 (EGCNCEAECS…SCRNRVVQCG (62 aa)). Cys27, Cys29, Cys33, Cys39, Cys41, Cys65, Cys69, Cys71, and Cys78 together coordinate Zn(2+). Residues 89-213 (KKLEIFSTCE…RGEELCYDYG (125 aa)) enclose the SET domain. S-adenosyl-L-methionine contacts are provided by residues 101-103 (KGF), Asp141, Tyr143, Arg170, and 173-174 (NH). 4 residues coordinate Zn(2+): Cys176, Cys225, Cys227, and Cys232. The region spanning 221–237 (NRKLCLCKSEKCRKYLP) is the Post-SET domain.

Belongs to the class V-like SAM-binding methyltransferase superfamily. Histone-lysine methyltransferase family. Suvar3-9 subfamily.

It is found in the nucleus. The protein resides in the chromosome. It catalyses the reaction L-lysyl-[histone] + S-adenosyl-L-methionine = N(6)-methyl-L-lysyl-[histone] + S-adenosyl-L-homocysteine + H(+). Probable histone methyltransferase. Required for embryonic development. The polypeptide is Probable histone-lysine N-methyltransferase set-23 (set-23) (Caenorhabditis elegans).